The chain runs to 372 residues: NAD(P)H-quinone oxidoreductase subunit 1, chloroplastic (372 aa).

The next 8 helical transmembrane spans lie at 28 to 48 (IWIC…VLVI), 65 to 85 (PEYA…KLIL), 97 to 117 (WLFT…YLVV), 128 to 148 (IGIG…GLLI), 166 to 186 (AAQA…IILM), 254 to 274 (FGLF…FVSV), 312 to 332 (GIIG…LAVL), and 352 to 372 (FLLP…ITLL).

Belongs to the complex I subunit 1 family. In terms of assembly, NDH is composed of at least 16 different subunits, 5 of which are encoded in the nucleus.

The protein resides in the plastid. The protein localises to the chloroplast thylakoid membrane. It catalyses the reaction a plastoquinone + NADH + (n+1) H(+)(in) = a plastoquinol + NAD(+) + n H(+)(out). It carries out the reaction a plastoquinone + NADPH + (n+1) H(+)(in) = a plastoquinol + NADP(+) + n H(+)(out). Its function is as follows. NDH shuttles electrons from NAD(P)H:plastoquinone, via FMN and iron-sulfur (Fe-S) centers, to quinones in the photosynthetic chain and possibly in a chloroplast respiratory chain. The immediate electron acceptor for the enzyme in this species is believed to be plastoquinone. Couples the redox reaction to proton translocation, and thus conserves the redox energy in a proton gradient. The protein is NAD(P)H-quinone oxidoreductase subunit 1, chloroplastic of Staurastrum punctulatum (Green alga).